The sequence spans 250 residues: Small ribosomal subunit protein uS2 (250 aa).

This sequence belongs to the universal ribosomal protein uS2 family.

This chain is Small ribosomal subunit protein uS2, found in Acidovorax ebreus (strain TPSY) (Diaphorobacter sp. (strain TPSY)).